Here is a 448-residue protein sequence, read N- to C-terminus: UDP-N-acetylglucosamine--dolichyl-phosphate N-acetylglucosaminephosphotransferase (448 aa).

The helical transmembrane segment at 24 to 44 threads the bilayer; sequence ALVAAVGFGIAGYLATDMLIP. UDP-N-acetyl-alpha-D-glucosamine is bound by residues 58-60 and Glu-70; that span reads KDL. The next 2 membrane-spanning stretches (helical) occupy residues 72–92 and 129–149; these read IGAI…PFIF and YLSA…DDLF. Dolichyl phosphate is bound at residue Lys-156. 2 helical membrane-spanning segments follow: residues 157-177 and 202-222; these read FFLP…DFGV and YVYM…LAGV. 210-218 serves as a coordination point for dolichyl phosphate; it reads IFCPNSINI. Asn-217 is a binding site for Mg(2+). Position 223 (Asn-223) interacts with UDP-N-acetyl-alpha-D-glucosamine. Helical transmembrane passes span 231-251, 256-276, 283-303, and 309-329; these read IVLA…GPLA, HRFS…LWKW, VFVG…VGIL, and TMLL…PQLF. Mg(2+) is bound at residue Asp-287. 336 to 338 serves as a coordination point for UDP-N-acetyl-alpha-D-glucosamine; sequence RHR. A run of 2 helical transmembrane segments spans residues 387 to 407 and 419 to 439; these read EIIS…FGPM and LQFC…AIIF.

This sequence belongs to the glycosyltransferase 4 family. Mg(2+) serves as cofactor.

It localises to the endoplasmic reticulum membrane. The catalysed reaction is a di-trans,poly-cis-dolichyl phosphate + UDP-N-acetyl-alpha-D-glucosamine = an N-acetyl-alpha-D-glucosaminyl-diphospho-di-trans,poly-cis-dolichol + UMP. It functions in the pathway protein modification; protein glycosylation. Its activity is regulated as follows. Inhibited by natural nucleoside antibiotic tunicamycin, which acts as a structural analog and competitor of UDP-GlcNAc. Its function is as follows. UDP-N-acetylglucosamine--dolichyl-phosphate N-acetylglucosaminephosphotransferase that operates in the biosynthetic pathway of dolichol-linked oligosaccharides, the glycan precursors employed in protein asparagine (N)-glycosylation. The assembly of dolichol-linked oligosaccharides begins on the cytosolic side of the endoplasmic reticulum membrane and finishes in its lumen. The sequential addition of sugars to dolichol pyrophosphate produces dolichol-linked oligosaccharides containing fourteen sugars, including two GlcNAcs, nine mannoses and three glucoses. Once assembled, the oligosaccharide is transferred from the lipid to nascent proteins by oligosaccharyltransferases. Catalyzes the initial step of dolichol-linked oligosaccharide biosynthesis, transfering GlcNAc-1-P from cytosolic UDP-GlcNAc onto the carrier lipid dolichyl phosphate (P-dolichol), yielding GlcNAc-P-P-dolichol embedded in the cytoplasmic leaflet of the endoplasmic reticulum membrane. This Saccharomyces cerevisiae (strain ATCC 204508 / S288c) (Baker's yeast) protein is UDP-N-acetylglucosamine--dolichyl-phosphate N-acetylglucosaminephosphotransferase (ALG7).